Here is a 124-residue protein sequence, read N- to C-terminus: Holo-[acyl-carrier-protein] synthase (124 aa).

Residues D5 and E56 each coordinate Mg(2+).

This sequence belongs to the P-Pant transferase superfamily. AcpS family. Mg(2+) is required as a cofactor.

The protein localises to the cytoplasm. It carries out the reaction apo-[ACP] + CoA = holo-[ACP] + adenosine 3',5'-bisphosphate + H(+). Its function is as follows. Transfers the 4'-phosphopantetheine moiety from coenzyme A to a Ser of acyl-carrier-protein. This Campylobacter hominis (strain ATCC BAA-381 / DSM 21671 / CCUG 45161 / LMG 19568 / NCTC 13146 / CH001A) protein is Holo-[acyl-carrier-protein] synthase.